Reading from the N-terminus, the 215-residue chain is Large ribosomal subunit protein bL25 (215 aa).

Positions glutamate 192–glutamate 202 are enriched in acidic residues. The interval glutamate 192–glutamate 215 is disordered. A compositionally biased stretch (basic and acidic residues) spans glutamate 204 to glutamate 215.

The protein belongs to the bacterial ribosomal protein bL25 family. CTC subfamily. As to quaternary structure, part of the 50S ribosomal subunit; part of the 5S rRNA/L5/L18/L25 subcomplex. Contacts the 5S rRNA. Binds to the 5S rRNA independently of L5 and L18.

In terms of biological role, this is one of the proteins that binds to the 5S RNA in the ribosome where it forms part of the central protuberance. The protein is Large ribosomal subunit protein bL25 of Thermotoga neapolitana (strain ATCC 49049 / DSM 4359 / NBRC 107923 / NS-E).